The following is a 232-amino-acid chain: tRNA-uridine aminocarboxypropyltransferase (232 aa).

Zn(2+) contacts are provided by Cys31, Cys34, Cys41, and Cys43. Positions 137-140 match the DXTW motif; it reads DGTW.

The protein belongs to the TDD superfamily. DTWD2 family. TapT subfamily. Monomer in solution.

It carries out the reaction a uridine in tRNA + S-adenosyl-L-methionine = a 3-[(3S)-3-amino-3-carboxypropyl]uridine in tRNA + S-methyl-5'-thioadenosine + H(+). It catalyses the reaction uridine(47) in tRNA(Phe) + S-adenosyl-L-methionine = 3-[(3S)-3-amino-3-carboxypropyl]uridine(47) in tRNA(Phe) + S-methyl-5'-thioadenosine + H(+). Its activity is regulated as follows. The degree of the acp3U modification at U47 is dependent on the presence of the m7G modification at the preceding nucleotide G46. It also depends on medium conditions. Functionally, catalyzes the formation of 3-(3-amino-3-carboxypropyl)uridine (acp3U) at position 47 of tRNAs. Acp3U47 confers thermal stability on tRNA. This Escherichia coli (strain K12) protein is tRNA-uridine aminocarboxypropyltransferase.